The following is a 602-amino-acid chain: Elongation factor 4 (602 aa).

One can recognise a tr-type G domain in the interval 6–188 (DHIRNFSIVA…AIVNKLPAPK (183 aa)). Residues 18–23 (DHGKST) and 135–138 (NKID) contribute to the GTP site.

It belongs to the TRAFAC class translation factor GTPase superfamily. Classic translation factor GTPase family. LepA subfamily.

It is found in the cell inner membrane. The enzyme catalyses GTP + H2O = GDP + phosphate + H(+). Functionally, required for accurate and efficient protein synthesis under certain stress conditions. May act as a fidelity factor of the translation reaction, by catalyzing a one-codon backward translocation of tRNAs on improperly translocated ribosomes. Back-translocation proceeds from a post-translocation (POST) complex to a pre-translocation (PRE) complex, thus giving elongation factor G a second chance to translocate the tRNAs correctly. Binds to ribosomes in a GTP-dependent manner. The sequence is that of Elongation factor 4 from Brucella melitensis biotype 2 (strain ATCC 23457).